Here is a 246-residue protein sequence, read N- to C-terminus: tRNA pseudouridine synthase A (246 aa).

D51 functions as the Nucleophile in the catalytic mechanism. Y105 is a substrate binding site.

Belongs to the tRNA pseudouridine synthase TruA family.

It carries out the reaction uridine(38/39/40) in tRNA = pseudouridine(38/39/40) in tRNA. Functionally, formation of pseudouridine at positions 38, 39 and 40 in the anticodon stem and loop of transfer RNAs. This chain is tRNA pseudouridine synthase A, found in Thermoplasma volcanium (strain ATCC 51530 / DSM 4299 / JCM 9571 / NBRC 15438 / GSS1).